We begin with the raw amino-acid sequence, 996 residues long: Disabled homolog 2-interacting protein (996 aa).

A C2 domain is found at 1 to 118; sequence MENLRRAVHP…AGRQFVEKWY (118 aa). The 209-residue stretch at 194–402 folds into the Ras-GAP domain; that stretch reads GKVKDFLTDL…TNMQRFLLEI (209 aa). The segment at 453-750 is necessary for interaction with AKT1; it reads LRDVHTALST…RTPPTMLSTL (298 aa). A compositionally biased stretch (polar residues) spans 460–475; sequence LSTPGSGQLPGTNDLA. 2 disordered regions span residues 460–486 and 522–545; these read LSTP…SSVS and RSSG…PDLQ. Residues 476-486 show a composition bias toward low complexity; that stretch reads STPGSGSSSVS. Residues 522–538 are compositionally biased toward polar residues; that stretch reads RSSGVQPSPARSSSYSE. Residue Ser535 is modified to Phosphoserine; by MAP3K5 and RIPK1. The residue at position 554 (Ser554) is a Phosphoserine. Disordered regions lie at residues 611-630, 650-672, 702-805, 822-841, and 971-996; these read VPTP…PQLL, PRGL…NSEE, SLTE…SPNA, EDEG…SKEE, and RNGV…SSNC. Low complexity predominate over residues 659–672; it reads EGHSSLSSHSNSEE. Positions 726-738 are enriched in pro residues; it reads QPPPPPPPPPPAP. 2 stretches are compositionally biased toward polar residues: residues 746 to 762 and 774 to 783; these read MLST…TLAS and LRQQSSSSKG. Ser785 and Ser802 each carry phosphoserine. Over residues 830–841 the composition is skewed to basic and acidic residues; the sequence is PPHRDRLRSKEE. Residues 832–966 adopt a coiled-coil conformation; sequence HRDRLRSKEE…SALTQLKERY (135 aa). The span at 974–996 shows a compositional bias: polar residues; it reads VSPTNPTKLQITENGEFRNSSNC.

On plasma membrane, exists in an inactive form complexed with TNFR1; in response to TNF-alpha, dissociates from TNFR1 complex, translocates to cytoplasm and forms part of an intracellular signaling complex comprising TRADD, RIPK1, TRAF2 and MAP3K5. Interacts (via NPXY motif) with DAB2 (via PID domain). Interacts (via PH domain) with ERN1. Part of a cytoplasmic complex made of HIPK1, DAB2IP and MAP3K5 in response to TNF-alpha; this complex formation promotes MAP3K5-JNK activation and subsequent apoptosis. Interacts (via N-terminal domain) with JAK2; the interaction occurs in a IFNG/IFN-gamma-dependent manner and inhibits JAK2 autophosphorylation activity. Interacts (via C2 domain) with GSK3B; the interaction stimulates GSK3B kinase activation. Interacts (via C2 domain) with PPP2CA. Interacts (via proline-rich motif) with a regulatory p85 subunit (via SH3 domain) of the PI3K complex; the interaction inhibits the PI3K-AKT complex activity in a TNF-alpha-dependent manner in prostate cancer (PCa) cells. Interacts with AKT1; the interaction is increased in a TNF-alpha-induced manner. Interacts (via C2 domain and active form preferentially) with KDR/VEGFR2 (tyrosine-phosphorylated active form preferentially); the interaction occurs at the late phase of VEGFA response and inhibits KDR/VEGFR2 activity. Interacts (via N-terminus C2 domain) with MAP3K5 ('Ser-966' dephosphorylated form preferentially); the interaction occurs in a TNF-alpha-induced manner. Interacts (via Ras-GAP domain) with the catalytic subunit of protein phosphatase PP2A; the interaction occurs in resting endothelial cells, is further enhanced by TNF-alpha stimulation and is required to bridge PP2A to MAP3K5. Interacts (via C-terminus PER domain) with TRAF2 (via zinc fingers); the interaction occurs in a TNF-alpha-dependent manner. Interacts with 14-3-3 proteins; the interaction occurs in a TNF-alpha-dependent manner. Interacts (via Ras-GAP domain) with RIPK1 (via kinase domain); the interaction occurs in a TNF-alpha-dependent manner. Interacts with DAB1 and DAB2. Interacts with RAB40C; acts as a GAP for RAB40C. In terms of processing, in response to TNF-alpha-induction, phosphorylated at Ser-535; phosphorylation leads to a conformational change, and thus, increases its association with 14-3-3 proteins, MAP3K5, RIPK1 and TRAF2 in endothelial cells; also stimulates regulatory p85 subunit sequestring and PI3K-p85 complex activity inhibition. As to expression, expressed in brain, lung, thymus, bladder and skeletal muscle. Up-regulatedd during prostate degeneration.

The protein resides in the cytoplasm. It is found in the cell membrane. The protein localises to the membrane. Its subcellular location is the cell projection. It localises to the dendrite. Functions as a scaffold protein implicated in the regulation of a large spectrum of both general and specialized signaling pathways. Involved in several processes such as innate immune response, inflammation and cell growth inhibition, apoptosis, cell survival, angiogenesis, cell migration and maturation. Also plays a role in cell cycle checkpoint control; reduces G1 phase cyclin levels resulting in G0/G1 cell cycle arrest. Mediates signal transduction by receptor-mediated inflammatory signals, such as the tumor necrosis factor (TNF), interferon (IFN) or lipopolysaccharide (LPS). Modulates the balance between phosphatidylinositol 3-kinase (PI3K)-AKT-mediated cell survival and apoptosis stimulated kinase (MAP3K5)-JNK signaling pathways; sequesters both AKT1 and MAP3K5 and counterbalances the activity of each kinase by modulating their phosphorylation status in response to pro-inflammatory stimuli. Acts as a regulator of the endoplasmic reticulum (ER) unfolded protein response (UPR) pathway; specifically involved in transduction of the ER stress-response to the JNK cascade through ERN1. Mediates TNF-alpha-induced apoptosis activation by facilitating dissociation of inhibitor 14-3-3 from MAP3K5; recruits the PP2A phosphatase complex which dephosphorylates MAP3K5 on 'Ser-966', leading to the dissociation of 13-3-3 proteins and activation of the MAP3K5-JNK signaling pathway in endothelial cells. Acts a negative regulator in the IFN-gamma-mediated JAK-STAT signaling cascade by inhibiting smooth muscle cell (VSMCs) proliferation and intimal expansion, and thus, prevents graft arteriosclerosis (GA). Acts as a GTPase-activating protein (GAP) for the ADP ribosylation factor 6 (ARF6). Promotes hydrolysis of the ARF6-bound GTP and thus, negatively regulates phosphatidylinositol 4,5-bisphosphate (PIP2)-dependent TLR4-TIRAP-MyD88 and NF-kappa-B signaling pathways in endothelial cells in response to lipopolysaccharides (LPS). Binds specifically to phosphatidylinositol 4-phosphate (PtdIns4P) and phosphatidylinositol 3-phosphate (PtdIns3P). In response to vascular endothelial growth factor (VEGFA), acts as a negative regulator of the VEGFR2-PI3K-mediated angiogenic signaling pathway by inhibiting endothelial cell migration and tube formation. In the developing brain, promotes both the transition from the multipolar to the bipolar stage and the radial migration of cortical neurons from the ventricular zone toward the superficial layer of the neocortex in a glial-dependent locomotion process. Probable downstream effector of the Reelin signaling pathway; promotes Purkinje cell (PC) dendrites development and formation of cerebellar synapses. Also functions as a tumor suppressor protein in prostate cancer progression; prevents cell proliferation and epithelial-to-mesenchymal transition (EMT) through activation of the glycogen synthase kinase-3 beta (GSK3B)-induced beta-catenin and inhibition of PI3K-AKT and Ras-MAPK survival downstream signaling cascades, respectively. Mediates TNF/TRAF2-induced MAP3K5-JNK activation, while it inhibits CHUK-NF-kappa-B signaling. Functions as a Ras GTPase-activating protein. May act as a tumor suppressor gene. This chain is Disabled homolog 2-interacting protein (Dab2ip), found in Rattus norvegicus (Rat).